The following is a 1341-amino-acid chain: DNA-directed RNA polymerase subunit beta (1341 aa).

This sequence belongs to the RNA polymerase beta chain family. The RNAP catalytic core consists of 2 alpha, 1 beta, 1 beta' and 1 omega subunit. When a sigma factor is associated with the core the holoenzyme is formed, which can initiate transcription.

It catalyses the reaction RNA(n) + a ribonucleoside 5'-triphosphate = RNA(n+1) + diphosphate. Its function is as follows. DNA-dependent RNA polymerase catalyzes the transcription of DNA into RNA using the four ribonucleoside triphosphates as substrates. The polypeptide is DNA-directed RNA polymerase subunit beta (Pseudoalteromonas translucida (strain TAC 125)).